Consider the following 213-residue polypeptide: Orotate phosphoribosyltransferase (213 aa).

A 5-phospho-alpha-D-ribose 1-diphosphate-binding site is contributed by Lys-26. Residue 34-35 coordinates orotate; it reads FF. Residues 72–73, Arg-99, Lys-100, Lys-103, His-105, and 124–132 each bind 5-phospho-alpha-D-ribose 1-diphosphate; these read YK and DDVITAGTA. Residues Thr-128 and Arg-156 each contribute to the orotate site.

It belongs to the purine/pyrimidine phosphoribosyltransferase family. PyrE subfamily. As to quaternary structure, homodimer. Mg(2+) is required as a cofactor.

It carries out the reaction orotidine 5'-phosphate + diphosphate = orotate + 5-phospho-alpha-D-ribose 1-diphosphate. It participates in pyrimidine metabolism; UMP biosynthesis via de novo pathway; UMP from orotate: step 1/2. In terms of biological role, catalyzes the transfer of a ribosyl phosphate group from 5-phosphoribose 1-diphosphate to orotate, leading to the formation of orotidine monophosphate (OMP). The sequence is that of Orotate phosphoribosyltransferase from Pseudomonas aeruginosa (strain UCBPP-PA14).